Here is a 373-residue protein sequence, read N- to C-terminus: MAGWSCLVTGAGGFLGQRIVRLLVEEKEVQEIRALDKVFRPELREEFSKLQSKVKLTVLEGDILDEQFLKRACQGASAVIHTASIIDVTNLFNPQVTMNVNVEGTQLLLEACSQASVPIFIYTSSVAVAGPNSYREIIQNGHEEAHLETKWSSPYPYSKKLAEKAVLAANGLPLKNGGTLYTCALRPMFIYGEGSPTLYYLMHEGLNNNGILTHNCKFSRANPVYVGNIAWAHIMALRALRDPKKAPSIQGQFYYISDDTPPQSYDDLTYTLSKKWGFCLDSRMRLPIFLKYWLAFLLEIVSFLLSPIYKYRPPFDRHLVTWQNSVFTFSYKKAQRDMGYEPLFSWEEAKKRTTEWIDALVEPHQEALKTKTL.

Y155 serves as the catalytic Proton acceptor. K159 serves as a coordination point for NAD(+). Residues 288-308 form a helical membrane-spanning segment; it reads IFLKYWLAFLLEIVSFLLSPI.

Belongs to the 3-beta-HSD family.

Its subcellular location is the endoplasmic reticulum membrane. It localises to the mitochondrion membrane. It catalyses the reaction a 3beta-hydroxy-Delta(5)-steroid + NAD(+) = a 3-oxo-Delta(5)-steroid + NADH + H(+). The enzyme catalyses a 3-oxo-Delta(5)-steroid = a 3-oxo-Delta(4)-steroid. It participates in lipid metabolism; steroid biosynthesis. In terms of biological role, 3-beta-HSD is a bifunctional enzyme, that catalyzes the oxidative conversion of Delta(5)-ene-3-beta-hydroxy steroid, and the oxidative conversion of ketosteroids. The 3-beta-HSD enzymatic system plays a crucial role in the biosynthesis of all classes of hormonal steroids. In Equus caballus (Horse), this protein is 3 beta-hydroxysteroid dehydrogenase/Delta 5--&gt;4-isomerase (HSD3B).